Consider the following 134-residue polypeptide: Large ribosomal subunit protein bL20 (134 aa).

This sequence belongs to the bacterial ribosomal protein bL20 family.

Its function is as follows. Binds directly to 23S ribosomal RNA and is necessary for the in vitro assembly process of the 50S ribosomal subunit. It is not involved in the protein synthesizing functions of that subunit. The protein is Large ribosomal subunit protein bL20 of Brucella anthropi (strain ATCC 49188 / DSM 6882 / CCUG 24695 / JCM 21032 / LMG 3331 / NBRC 15819 / NCTC 12168 / Alc 37) (Ochrobactrum anthropi).